The sequence spans 462 residues: Probable threonine/serine transporter YbxG (462 aa).

12 helical membrane-spanning segments follow: residues 17–37 (MIALGGTIGVGLFMGSASTIS), 38–58 (WTGPSVLLAYAICGIFIFFIM), 89–109 (ITAWSNWFQWIIVGMSEIIAV), 121–141 (PAWIPGIVAMVILGAANLISV), 154–174 (IKIVTIILMIIAGIGIIFFGF), 190–210 (GGFFAGGFSGFFFALSLVIAA), 238–258 (IIWRILIFYIGAIFVIVTVYP), 276–296 (IGITAAAGIINFVVITAAMSG), 331–351 (LYGTIAVLIGLAVGVVLNYIA), 355–375 (IFVYVYSASVLPGMIPWFIIL), 398–418 (FAPFTNYLTIAFLLMVLVGMW), and 427–447 (LIVGVIFLALVVISYYVFGIG).

It belongs to the amino acid-polyamine-organocation (APC) superfamily.

The protein resides in the cell membrane. In terms of biological role, probable threonine transporter. Is also active as a minor serine permease. This is Probable threonine/serine transporter YbxG (ybxG) from Bacillus subtilis (strain 168).